The following is a 706-amino-acid chain: DNA ligase (706 aa).

NAD(+) is bound by residues 47-51, 96-97, and Glu-133; these read DSEYD and SI. Catalysis depends on Lys-135, which acts as the N6-AMP-lysine intermediate. 4 residues coordinate NAD(+): Arg-156, Glu-192, Lys-323, and Lys-347. Residues Cys-441, Cys-444, Cys-459, and Cys-465 each coordinate Zn(2+). In terms of domain architecture, BRCT spans 624 to 706; it reads VAPKPLSGKT…MRLLASAEAE (83 aa).

The protein belongs to the NAD-dependent DNA ligase family. LigA subfamily. It depends on Mg(2+) as a cofactor. Mn(2+) serves as cofactor.

The enzyme catalyses NAD(+) + (deoxyribonucleotide)n-3'-hydroxyl + 5'-phospho-(deoxyribonucleotide)m = (deoxyribonucleotide)n+m + AMP + beta-nicotinamide D-nucleotide.. Its function is as follows. DNA ligase that catalyzes the formation of phosphodiester linkages between 5'-phosphoryl and 3'-hydroxyl groups in double-stranded DNA using NAD as a coenzyme and as the energy source for the reaction. It is essential for DNA replication and repair of damaged DNA. In Polaromonas sp. (strain JS666 / ATCC BAA-500), this protein is DNA ligase.